A 110-amino-acid polypeptide reads, in one-letter code: Large ribosomal subunit protein uL22 (110 aa).

This sequence belongs to the universal ribosomal protein uL22 family. Part of the 50S ribosomal subunit.

This protein binds specifically to 23S rRNA; its binding is stimulated by other ribosomal proteins, e.g. L4, L17, and L20. It is important during the early stages of 50S assembly. It makes multiple contacts with different domains of the 23S rRNA in the assembled 50S subunit and ribosome. Its function is as follows. The globular domain of the protein is located near the polypeptide exit tunnel on the outside of the subunit, while an extended beta-hairpin is found that lines the wall of the exit tunnel in the center of the 70S ribosome. The protein is Large ribosomal subunit protein uL22 of Idiomarina loihiensis (strain ATCC BAA-735 / DSM 15497 / L2-TR).